A 260-amino-acid chain; its full sequence is ARL14 effector protein (260 aa).

An N-acetylmethionine modification is found at Met1. Residue Lys177 forms a Glycyl lysine isopeptide (Lys-Gly) (interchain with G-Cter in SUMO2) linkage. Ser183 carries the post-translational modification Phosphoserine.

Interacts with ARL14 and MYO1E.

Its subcellular location is the cytoplasm. Functionally, through its interaction with ARL14 and MYO1E, may connect MHC class II-containing cytoplasmic vesicles to the actin network and hence controls the movement of these vesicles along the actin cytoskeleton in dendritic cells. The sequence is that of ARL14 effector protein (ARL14EP) from Bos taurus (Bovine).